Here is a 221-residue protein sequence, read N- to C-terminus: ATP phosphoribosyltransferase (221 aa).

Belongs to the ATP phosphoribosyltransferase family. Short subfamily. Heteromultimer composed of HisG and HisZ subunits.

It localises to the cytoplasm. It catalyses the reaction 1-(5-phospho-beta-D-ribosyl)-ATP + diphosphate = 5-phospho-alpha-D-ribose 1-diphosphate + ATP. Its pathway is amino-acid biosynthesis; L-histidine biosynthesis; L-histidine from 5-phospho-alpha-D-ribose 1-diphosphate: step 1/9. In terms of biological role, catalyzes the condensation of ATP and 5-phosphoribose 1-diphosphate to form N'-(5'-phosphoribosyl)-ATP (PR-ATP). Has a crucial role in the pathway because the rate of histidine biosynthesis seems to be controlled primarily by regulation of HisG enzymatic activity. This Anaeromyxobacter dehalogenans (strain 2CP-1 / ATCC BAA-258) protein is ATP phosphoribosyltransferase.